Consider the following 143-residue polypeptide: Transcriptional regulator MraZ (143 aa).

2 SpoVT-AbrB domains span residues 5 to 47 and 76 to 119; these read THSP…PIRE and ASNE…DAQT.

It belongs to the MraZ family. In terms of assembly, forms oligomers.

The protein localises to the cytoplasm. The protein resides in the nucleoid. The chain is Transcriptional regulator MraZ from Thermobifida fusca (strain YX).